The primary structure comprises 420 residues: Tubulin epsilon and delta complex protein 1 (420 aa).

Residues 276–340 adopt a coiled-coil conformation; sequence SEGGLGELES…AVQQELAALQ (65 aa). A compositionally biased stretch (polar residues) spans 342–351; the sequence is SWEQSSTPGQ. The disordered stretch occupies residues 342–369; that stretch reads SWEQSSTPGQPQRPHRLVRSKDGAPRPQ. Positions 377 to 409 form a coiled coil; the sequence is IRTLSAKEACLKKALHQLQRQCQQELARLAGAL.

Interacts with TEDC2. Found in a complex with TEDC1, TEDC2, TUBE1 and TUBD1.

Its subcellular location is the cell projection. The protein localises to the cilium. It localises to the cytoplasm. It is found in the cytoskeleton. The protein resides in the microtubule organizing center. Its subcellular location is the centrosome. The protein localises to the centriole. Functionally, acts as a positive regulator of ciliary hedgehog signaling. Required for centriole stability. May play a role in counteracting perturbation of actin filaments, such as after treatment with the actin depolymerizing microbial metabolite Chivosazole F. The sequence is that of Tubulin epsilon and delta complex protein 1 from Mus musculus (Mouse).